The following is a 631-amino-acid chain: PTS system beta-glucoside-specific EIIBCA component (631 aa).

The PTS EIIB type-1 domain occupies 1-86; sequence MNYETLASEI…LSLDGMARFS (86 aa). Cys26 functions as the Phosphocysteine intermediate; for EIIB activity in the catalytic mechanism. Residues 105–466 form the PTS EIIC type-1 domain; sequence DIISSIFTPF…DETQPAAADS (362 aa). 10 consecutive transmembrane segments (helical) span residues 120 to 140, 146 to 166, 175 to 195, 206 to 226, 248 to 268, 295 to 315, 328 to 348, 358 to 378, 385 to 405, and 434 to 454; these read ATGI…ISES, LLFA…GYTA, FTTL…AFNA, FLGI…ILFA, FFTP…LIGP, VMGA…FVPL, LLPL…GVLL, IAGS…VYGV, PFIF…YAHT, and AVIG…SFGV. The PTS EIIA type-1 domain occupies 501–605; that stretch reads DRTFASGVMG…DLTTPIVITN (105 aa). The active-site Tele-phosphohistidine intermediate; for EIIA activity is the His553.

The protein localises to the cell inner membrane. In terms of biological role, the phosphoenolpyruvate-dependent sugar phosphotransferase system (sugar PTS), a major carbohydrate active -transport system, catalyzes the phosphorylation of incoming sugar substrates concomitantly with their translocation across the cell membrane. This system is involved in beta-glucoside transport. Its function is as follows. Acts both as a kinase and as a phosphatase on ArbG. The sequence is that of PTS system beta-glucoside-specific EIIBCA component (arbF) from Dickeya chrysanthemi (Pectobacterium chrysanthemi).